The chain runs to 429 residues: MKSLSLILSALAVQVAVAQTPDKAKEQHPKLETYRCTKASGCKKQTNYIVADAGIHGIRQKNGAGCGDWGQKPNATACPDEASCAKNCILSGMDSNAYKNAGITTSGNKLRLQQLINNQLVSPRVYLLEENKKKYEMLHLTGTEFSFDVEMEKLPCGMNGALYLSEMPQDGGKSTSRNSKAGAYYGAGYCDAQCYVTPFINGVGNIKGQGVCCNELDIWEANSRATHIAPHPCSKPGLYGCTGDECGSSGICDKAGCGWNHNRINVTDFYGRGKQYKVDSTRKFTVTSQFVANKQGDLIELHRHYIQDNKVIESAVVNISGPPKINFINDKYCAATGANEYMRLGGTKQMGDAMSRGMVLAMSVWWSEGDFMAWLDQGVAGPCDATEGDPKNIVKVQPNPEVTFSNIRIGEIGSTSSVKAPAYPGPHRL.

The N-terminal stretch at 1–18 is a signal peptide; it reads MKSLSLILSALAVQVAVA. Gln19 is modified (pyrrolidone carboxylic acid). 9 cysteine pairs are disulfide-bonded: Cys36–Cys42, Cys66–Cys88, Cys78–Cys84, Cys156–Cys383, Cys190–Cys213, Cys194–Cys212, Cys233–Cys252, Cys241–Cys246, and Cys257–Cys333. N-linked (GlcNAc...) asparagine glycosylation is present at Asn74. Glu215 (nucleophile) is an active-site residue. The active-site Proton donor is Glu220. Asn265 and Asn318 each carry an N-linked (GlcNAc...) asparagine glycan.

It belongs to the glycosyl hydrolase 7 (cellulase C) family.

It catalyses the reaction Endohydrolysis of (1-&gt;4)-beta-D-glucosidic linkages in cellulose, lichenin and cereal beta-D-glucans.. This Fusarium oxysporum (Fusarium vascular wilt) protein is Endoglucanase type C.